Here is a 309-residue protein sequence, read N- to C-terminus: Anamorsin (309 aa).

The tract at residues 6–172 (ISPGQLVAVF…KPNFEVGSSS (167 aa)) is N-terminal SAM-like domain. Residues 173–222 (QLKLPNKKSSSVKPVVDPAAAKLWTLSANDMEDDSVDLIDSDELLDPEDL) form a linker region. 3 positions are modified to phosphoserine: Ser-182, Ser-183, and Ser-213. The [2Fe-2S] cluster site is built by Cys-235, Cys-244, Cys-247, and Cys-249. The segment at 235–249 (CGEGKKRKACKNCTC) is fe-S binding site A. Ser-269 carries the post-translational modification Phosphoserine. Cys-271, Cys-274, Cys-282, and Cys-285 together coordinate [4Fe-4S] cluster. 2 consecutive short sequence motifs (cx2C motif) follow at residues 271–274 (CGNC) and 282–285 (CANC). The segment at 271 to 285 (CGNCYLGDAFRCANC) is fe-S binding site B. Residues Ser-302 and Ser-304 each carry the phosphoserine modification.

The protein belongs to the anamorsin family. Monomer. Interacts with NDOR1. Interacts with CHCHD4. [2Fe-2S] cluster serves as cofactor. It depends on [4Fe-4S] cluster as a cofactor.

Its subcellular location is the cytoplasm. The protein resides in the nucleus. It localises to the mitochondrion intermembrane space. Functionally, component of the cytosolic iron-sulfur (Fe-S) protein assembly (CIA) machinery required for the maturation of extramitochondrial Fe-S proteins. Part of an electron transfer chain functioning in an early step of cytosolic Fe-S biogenesis, facilitating the de novo assembly of a [4Fe-4S] cluster on the scaffold complex NUBP1-NUBP2. Electrons are transferred to CIAPIN1 from NADPH via the FAD- and FMN-containing protein NDOR1. NDOR1-CIAPIN1 are also required for the assembly of the diferric tyrosyl radical cofactor of ribonucleotide reductase (RNR), probably by providing electrons for reduction during radical cofactor maturation in the catalytic small subunit. Has anti-apoptotic effects in the cell. Involved in negative control of cell death upon cytokine withdrawal. Promotes development of hematopoietic cells. In Mus musculus (Mouse), this protein is Anamorsin.